We begin with the raw amino-acid sequence, 339 residues long: MISFNNVSKLYESAGQSVHAVEDVTLSVEKGEIFGIIGFSGAGKSTLLRLVNMLERPTAGTISIDDKDITSLSTKELRKLRQRIGMIFQSFNLFNSRTVFGNIAYPLKLAKVPKNEIKERVNELLKFVGLEDKANYYPEQLSGGQKQRVGIARALATSPDILICDEATSALDPETTTEILNLLKKVNREYNLTILLITHEMHVVKEICHRVAVMEKGKVIEEGKLFDVFTQPKTKTTQNFVRSVINDHLPESVLAKIQNGGQIYRLTFTGEETGQPVLSYIAKNYNVDVNVLYGNIIELQNVLFGNLLVELQGEQREIQKALQHLRLQVQLKEVEAHAS.

The region spanning 2 to 241 is the ABC transporter domain; sequence ISFNNVSKLY…PKTKTTQNFV (240 aa). ATP is bound at residue 38–45; that stretch reads GFSGAGKS.

Belongs to the ABC transporter superfamily. Methionine importer (TC 3.A.1.24) family. As to quaternary structure, the complex is composed of two ATP-binding proteins (MetN), two transmembrane proteins (MetI) and a solute-binding protein (MetQ).

The protein resides in the cell membrane. It carries out the reaction L-methionine(out) + ATP + H2O = L-methionine(in) + ADP + phosphate + H(+). It catalyses the reaction D-methionine(out) + ATP + H2O = D-methionine(in) + ADP + phosphate + H(+). In terms of biological role, part of the ABC transporter complex MetNIQ involved in methionine import. Responsible for energy coupling to the transport system. This is Methionine import ATP-binding protein MetN 2 from Bacillus cereus (strain ATCC 14579 / DSM 31 / CCUG 7414 / JCM 2152 / NBRC 15305 / NCIMB 9373 / NCTC 2599 / NRRL B-3711).